Reading from the N-terminus, the 342-residue chain is L-threonine 3-dehydrogenase (342 aa).

Position 38 (cysteine 38) interacts with Zn(2+). Residues threonine 40 and histidine 43 each act as charge relay system in the active site. Positions 63, 64, 93, 96, 99, and 107 each coordinate Zn(2+). NAD(+) is bound by residues isoleucine 175, aspartate 195, arginine 200, 262–264 (LGI), and 286–287 (IY).

It belongs to the zinc-containing alcohol dehydrogenase family. As to quaternary structure, homotetramer. The cofactor is Zn(2+).

It is found in the cytoplasm. The catalysed reaction is L-threonine + NAD(+) = (2S)-2-amino-3-oxobutanoate + NADH + H(+). It functions in the pathway amino-acid degradation; L-threonine degradation via oxydo-reductase pathway; glycine from L-threonine: step 1/2. In terms of biological role, catalyzes the NAD(+)-dependent oxidation of L-threonine to 2-amino-3-ketobutyrate. The polypeptide is L-threonine 3-dehydrogenase (Burkholderia multivorans (strain ATCC 17616 / 249)).